Here is a 454-residue protein sequence, read N- to C-terminus: UDP-N-acetylmuramoylalanine--D-glutamate ligase (454 aa).

Position 116-122 (116-122 (GTNGKTS)) interacts with ATP.

The protein belongs to the MurCDEF family.

It is found in the cytoplasm. It carries out the reaction UDP-N-acetyl-alpha-D-muramoyl-L-alanine + D-glutamate + ATP = UDP-N-acetyl-alpha-D-muramoyl-L-alanyl-D-glutamate + ADP + phosphate + H(+). It functions in the pathway cell wall biogenesis; peptidoglycan biosynthesis. Cell wall formation. Catalyzes the addition of glutamate to the nucleotide precursor UDP-N-acetylmuramoyl-L-alanine (UMA). This chain is UDP-N-acetylmuramoylalanine--D-glutamate ligase, found in Lachnoclostridium phytofermentans (strain ATCC 700394 / DSM 18823 / ISDg) (Clostridium phytofermentans).